A 304-amino-acid chain; its full sequence is Acetyl-coenzyme A carboxylase carboxyl transferase subunit beta (304 aa).

A CoA carboxyltransferase N-terminal domain is found at 23 to 292 (VWTKCDSCGQ…PNPEAPREGV (270 aa)). The Zn(2+) site is built by Cys27, Cys30, Cys46, and Cys49. The segment at 27-49 (CDSCGQVLYRAELERNLEVCPKC) adopts a C4-type zinc-finger fold. Residues 284-304 (NPEAPREGVVVPPVPDQEPEA) form a disordered region. Positions 295-304 (PPVPDQEPEA) are enriched in pro residues.

This sequence belongs to the AccD/PCCB family. In terms of assembly, acetyl-CoA carboxylase is a heterohexamer composed of biotin carboxyl carrier protein (AccB), biotin carboxylase (AccC) and two subunits each of ACCase subunit alpha (AccA) and ACCase subunit beta (AccD). The cofactor is Zn(2+).

It is found in the cytoplasm. The catalysed reaction is N(6)-carboxybiotinyl-L-lysyl-[protein] + acetyl-CoA = N(6)-biotinyl-L-lysyl-[protein] + malonyl-CoA. The protein operates within lipid metabolism; malonyl-CoA biosynthesis; malonyl-CoA from acetyl-CoA: step 1/1. Its function is as follows. Component of the acetyl coenzyme A carboxylase (ACC) complex. Biotin carboxylase (BC) catalyzes the carboxylation of biotin on its carrier protein (BCCP) and then the CO(2) group is transferred by the transcarboxylase to acetyl-CoA to form malonyl-CoA. This chain is Acetyl-coenzyme A carboxylase carboxyl transferase subunit beta, found in Shigella boydii serotype 4 (strain Sb227).